A 207-amino-acid polypeptide reads, in one-letter code: MSDENRLVAAVRTEFGKGAARRARRDGQVPAVLYGHGEDPRHLNVPSRDFAAILRAHGTNAILTLDIEGKEQVALTKSVVVHPIRNYIEHADLLVIKKGEKVTVDVPVVVTGEAAAGTLVAQDAATISLEADALHIPEQIEVSVEGLEVGTQILANQLELPKGSTLQADEELLIVNVVAAPTAADLEEETGEAAAEAEAPAEEGAES.

Residues 185–207 (DLEEETGEAAAEAEAPAEEGAES) form a disordered region.

Belongs to the bacterial ribosomal protein bL25 family. CTC subfamily. In terms of assembly, part of the 50S ribosomal subunit; part of the 5S rRNA/L5/L18/L25 subcomplex. Contacts the 5S rRNA. Binds to the 5S rRNA independently of L5 and L18.

In terms of biological role, this is one of the proteins that binds to the 5S RNA in the ribosome where it forms part of the central protuberance. The polypeptide is Large ribosomal subunit protein bL25 (Rhodococcus jostii (strain RHA1)).